A 262-amino-acid chain; its full sequence is GTP cyclohydrolase 1 type 2 homolog (262 aa).

Residues His-68, His-69, Asp-108, His-226, and Glu-229 each coordinate a divalent metal cation.

The protein belongs to the GTP cyclohydrolase I type 2/NIF3 family. In terms of assembly, homohexamer.

This chain is GTP cyclohydrolase 1 type 2 homolog, found in Ureaplasma parvum serovar 3 (strain ATCC 700970).